The sequence spans 383 residues: Probable endoplasmic reticulum-Golgi intermediate compartment protein 3 (383 aa).

Over methionine 1–glycine 26 the chain is Cytoplasmic. A helical transmembrane segment spans residues alanine 27 to leucine 47. The Lumenal portion of the chain corresponds to tyrosine 48–asparagine 347. Residues valine 348–tyrosine 368 traverse the membrane as a helical segment. Topologically, residues serine 369–phenylalanine 383 are cytoplasmic.

The protein belongs to the ERGIC family.

It localises to the endoplasmic reticulum-Golgi intermediate compartment membrane. The protein resides in the golgi apparatus. Its subcellular location is the cis-Golgi network membrane. The protein localises to the endoplasmic reticulum membrane. In terms of biological role, possible role in transport between endoplasmic reticulum and Golgi. This is Probable endoplasmic reticulum-Golgi intermediate compartment protein 3 (ergic3) from Dictyostelium discoideum (Social amoeba).